The primary structure comprises 450 residues: Plasmepsin VII (450 aa).

Positions 1–24 (MNKNIIQIYLFVFILLLKQHIVIL) are cleaved as a signal peptide. The region spanning 92-441 (YYGEVQIGEQ…DKDNLKIGFV (350 aa)) is the Peptidase A1 domain. Residues D111 and D324 contribute to the active site.

It belongs to the peptidase A1 family.

It is found in the cytoplasm. The polypeptide is Plasmepsin VII (Plasmodium falciparum (isolate NF54)).